Here is a 114-residue protein sequence, read N- to C-terminus: Large ribosomal subunit protein uL22 (114 aa).

The protein belongs to the universal ribosomal protein uL22 family. In terms of assembly, part of the 50S ribosomal subunit.

Its function is as follows. This protein binds specifically to 23S rRNA; its binding is stimulated by other ribosomal proteins, e.g. L4, L17, and L20. It is important during the early stages of 50S assembly. It makes multiple contacts with different domains of the 23S rRNA in the assembled 50S subunit and ribosome. The globular domain of the protein is located near the polypeptide exit tunnel on the outside of the subunit, while an extended beta-hairpin is found that lines the wall of the exit tunnel in the center of the 70S ribosome. The polypeptide is Large ribosomal subunit protein uL22 (Aeromonas hydrophila subsp. hydrophila (strain ATCC 7966 / DSM 30187 / BCRC 13018 / CCUG 14551 / JCM 1027 / KCTC 2358 / NCIMB 9240 / NCTC 8049)).